The chain runs to 478 residues: Ninja-family protein 8 (478 aa).

Disordered regions lie at residues 1 to 247 (MDDD…LTPG), 337 to 374 (FTAK…EKKA), and 454 to 478 (DAPA…SAEN). Residues 23–35 (KARDAPLEPKAEP) show a composition bias toward basic and acidic residues. A compositionally biased stretch (polar residues) spans 169–179 (ISISTDDGSTG). A compositionally biased stretch (acidic residues) spans 180–189 (ENEDVAESEA). A compositionally biased stretch (low complexity) spans 233-242 (SFSGSESSSG). Positions 339–358 (AKDKADQTGTKQVDDGKKPQ) are enriched in basic and acidic residues.

It belongs to the Ninja family.

The protein localises to the nucleus. The polypeptide is Ninja-family protein 8 (Zea mays (Maize)).